The primary structure comprises 1893 residues: Protein TIC 214 (1893 aa).

The next 6 helical transmembrane spans lie at 18-38 (IINS…FSIG), 63-83 (AITG…YAPL), 87-107 (LGRP…HFFW), 127-147 (LSIQ…HFIL), 175-195 (VGWL…LVWI), and 224-244 (IFSI…PSPI). 2 stretches are compositionally biased toward basic and acidic residues: residues 249 to 258 (MKETSETEER) and 268 to 287 (EIER…RSTE). Residues 249-317 (MKETSETEER…TEEIRVNGKE (69 aa)) are disordered. Residues 298–309 (EKEDPDKIDETE) show a composition bias toward acidic residues. A helical transmembrane segment spans residues 1126–1146 (LHYFIKFFIERIYIDILLCLI).

This sequence belongs to the TIC214 family. Part of the Tic complex.

It localises to the plastid. The protein localises to the chloroplast inner membrane. Functionally, involved in protein precursor import into chloroplasts. May be part of an intermediate translocation complex acting as a protein-conducting channel at the inner envelope. This chain is Protein TIC 214, found in Vitis vinifera (Grape).